Reading from the N-terminus, the 134-residue chain is Ribonuclease P protein component (134 aa).

It belongs to the RnpA family. In terms of assembly, consists of a catalytic RNA component (M1 or rnpB) and a protein subunit.

It catalyses the reaction Endonucleolytic cleavage of RNA, removing 5'-extranucleotides from tRNA precursor.. RNaseP catalyzes the removal of the 5'-leader sequence from pre-tRNA to produce the mature 5'-terminus. It can also cleave other RNA substrates such as 4.5S RNA. The protein component plays an auxiliary but essential role in vivo by binding to the 5'-leader sequence and broadening the substrate specificity of the ribozyme. The sequence is that of Ribonuclease P protein component from Pseudomonas putida (strain GB-1).